The following is a 79-amino-acid chain: Protein Vpu (79 aa).

Topologically, residues 1-7 are extracellular; sequence MLLLIKL. A helical transmembrane segment spans residues 8–28; sequence GFIGLAIETLIVIVVWAIVYR. Residues 29 to 79 lie on the Cytoplasmic side of the membrane; sequence IYREVKVEEKISQLRQRIRDRAEDSGNESDGDAEELANLLPPDRIDQDNWV. The disordered stretch occupies residues 48-79; the sequence is DRAEDSGNESDGDAEELANLLPPDRIDQDNWV. A phosphoserine; by host CK2 mark is found at Ser53 and Ser57. A compositionally biased stretch (acidic residues) spans 53–63; the sequence is SGNESDGDAEE.

The protein belongs to the HIV-1 VPU protein family. As to quaternary structure, homopentamer. Interacts with host CD4 and BRTC; these interactions induce proteasomal degradation of CD4. Interacts with host BST2; this interaction leads to the degradation of host BST2. Interacts with host FBXW11. Interacts with host AP1M1; this interaction plays a role in the mistrafficking and subsequent degradation of host BST2. Interacts with host RANBP2; this interaction allows Vpu to down-regulate host BLM sumoylation. Phosphorylated by host CK2. This phosphorylation is necessary for interaction with human BTRC and degradation of CD4.

The protein localises to the host membrane. Ion channel activity is inhibited by hexamethylene amiloride in vitro. Enhances virion budding by targeting host CD4 and Tetherin/BST2 to proteasome degradation. Degradation of CD4 prevents any unwanted premature interactions between viral Env and its host receptor CD4 in the endoplasmic reticulum. Degradation of antiretroviral protein Tetherin/BST2 is important for virion budding, as BST2 tethers new viral particles to the host cell membrane. Mechanistically, Vpu bridges either CD4 or BST2 to BTRC, a substrate recognition subunit of the Skp1/Cullin/F-box protein E3 ubiquitin ligase, induces their ubiquitination and subsequent proteasomal degradation. The alteration of the E3 ligase specificity by Vpu seems to promote the degradation of host IKBKB, leading to NF-kappa-B down-regulation and subsequent apoptosis. Acts as a viroporin that forms an oligomeric ion channel in membranes. Modulates the host DNA repair mechanisms to promote degradation of nuclear viral cDNA in cells that are already productively infected in order to suppress immune sensing and proviral hyper-integration (superinfection). Manipulates PML-NBs and modulates SUMOylation of host BLM protein thereby enhancing its DNA-end processing activity toward viral unintegrated linear DNA. Also inhibits RAD52-mediated homologous repair of viral cDNA, preventing the generation of dead-end circular forms of single copies of the long terminal repeat and permitting sustained nucleolytic attack. The protein is Protein Vpu of Pan troglodytes (Chimpanzee).